Here is an 857-residue protein sequence, read N- to C-terminus: Leucine--tRNA ligase (857 aa).

The short motif at 42–52 (PYPSGNLHMGH) is the 'HIGH' region element. A 'KMSKS' region motif is present at residues 615–619 (KMSKS). ATP is bound at residue Lys-618.

This sequence belongs to the class-I aminoacyl-tRNA synthetase family.

The protein resides in the cytoplasm. It carries out the reaction tRNA(Leu) + L-leucine + ATP = L-leucyl-tRNA(Leu) + AMP + diphosphate. This Thermosynechococcus vestitus (strain NIES-2133 / IAM M-273 / BP-1) protein is Leucine--tRNA ligase.